The sequence spans 363 residues: UDP-N-acetylglucosamine--N-acetylmuramyl-(pentapeptide) pyrophosphoryl-undecaprenol N-acetylglucosamine transferase (363 aa).

Residues 14-16, Asn-122, Arg-163, Ser-190, and Gln-285 contribute to the UDP-N-acetyl-alpha-D-glucosamine site; that span reads TGG.

This sequence belongs to the glycosyltransferase 28 family. MurG subfamily.

The protein resides in the cell inner membrane. It catalyses the reaction di-trans,octa-cis-undecaprenyl diphospho-N-acetyl-alpha-D-muramoyl-L-alanyl-D-glutamyl-meso-2,6-diaminopimeloyl-D-alanyl-D-alanine + UDP-N-acetyl-alpha-D-glucosamine = di-trans,octa-cis-undecaprenyl diphospho-[N-acetyl-alpha-D-glucosaminyl-(1-&gt;4)]-N-acetyl-alpha-D-muramoyl-L-alanyl-D-glutamyl-meso-2,6-diaminopimeloyl-D-alanyl-D-alanine + UDP + H(+). It participates in cell wall biogenesis; peptidoglycan biosynthesis. Functionally, cell wall formation. Catalyzes the transfer of a GlcNAc subunit on undecaprenyl-pyrophosphoryl-MurNAc-pentapeptide (lipid intermediate I) to form undecaprenyl-pyrophosphoryl-MurNAc-(pentapeptide)GlcNAc (lipid intermediate II). This Prochlorococcus marinus (strain MIT 9312) protein is UDP-N-acetylglucosamine--N-acetylmuramyl-(pentapeptide) pyrophosphoryl-undecaprenol N-acetylglucosamine transferase.